The primary structure comprises 274 residues: Large ribosomal subunit protein uL2cz/uL2cy (274 aa).

The tract at residues 224 to 252 (NPVDHPHGGGEGRAPIGRKKPVTPWGYPA) is disordered.

Belongs to the universal ribosomal protein uL2 family. As to quaternary structure, part of the 50S ribosomal subunit.

Its subcellular location is the plastid. It localises to the chloroplast. The polypeptide is Large ribosomal subunit protein uL2cz/uL2cy (rpl2-A) (Capsella bursa-pastoris (Shepherd's purse)).